Consider the following 768-residue polypeptide: UPF0313 protein VV2143 (768 aa).

A Radical SAM core domain is found at 363–640; sequence AYDMIKTSVN…LHKALLRYHD (278 aa). Residues Cys-377, Cys-381, and Cys-384 each coordinate [4Fe-4S] cluster. The disordered stretch occupies residues 674–768; it reads DARTPAQRRK…GGRNQPSRAR (95 aa). Over residues 679-689 the composition is skewed to basic residues; the sequence is AQRRKSGRHGA. A compositionally biased stretch (polar residues) spans 719–731; sequence GGQSNSAPSRSGS.

This sequence belongs to the UPF0313 family. The cofactor is [4Fe-4S] cluster.

In Vibrio vulnificus (strain YJ016), this protein is UPF0313 protein VV2143.